The following is a 1229-amino-acid chain: DNA-directed RNA polymerase subunit beta (1229 aa).

Residues E1175 to E1229 are disordered. 2 stretches are compositionally biased toward acidic residues: residues E1195 to D1204 and D1211 to E1229.

It belongs to the RNA polymerase beta chain family. The RNAP catalytic core consists of 2 alpha, 1 beta, 1 beta' and 1 omega subunit. When a sigma factor is associated with the core the holoenzyme is formed, which can initiate transcription.

It carries out the reaction RNA(n) + a ribonucleoside 5'-triphosphate = RNA(n+1) + diphosphate. Its function is as follows. DNA-dependent RNA polymerase catalyzes the transcription of DNA into RNA using the four ribonucleoside triphosphates as substrates. The sequence is that of DNA-directed RNA polymerase subunit beta from Caldicellulosiruptor saccharolyticus (strain ATCC 43494 / DSM 8903 / Tp8T 6331).